The sequence spans 255 residues: Indole-3-glycerol phosphate synthase (255 aa).

Belongs to the TrpC family.

It carries out the reaction 1-(2-carboxyphenylamino)-1-deoxy-D-ribulose 5-phosphate + H(+) = (1S,2R)-1-C-(indol-3-yl)glycerol 3-phosphate + CO2 + H2O. It functions in the pathway amino-acid biosynthesis; L-tryptophan biosynthesis; L-tryptophan from chorismate: step 4/5. This chain is Indole-3-glycerol phosphate synthase, found in Streptococcus thermophilus (strain CNRZ 1066).